The sequence spans 252 residues: Triosephosphate isomerase (252 aa).

10-12 (NWK) provides a ligand contact to substrate. His-96 functions as the Electrophile in the catalytic mechanism. Glu-168 acts as the Proton acceptor in catalysis. Substrate contacts are provided by residues Gly-174, Ser-214, and 235-236 (GG).

This sequence belongs to the triosephosphate isomerase family. Homodimer.

The protein resides in the cytoplasm. The enzyme catalyses D-glyceraldehyde 3-phosphate = dihydroxyacetone phosphate. It participates in carbohydrate biosynthesis; gluconeogenesis. Its pathway is carbohydrate degradation; glycolysis; D-glyceraldehyde 3-phosphate from glycerone phosphate: step 1/1. Seems to be capable of enhancing bacteriocin synthesis. In terms of biological role, involved in the gluconeogenesis. Catalyzes stereospecifically the conversion of dihydroxyacetone phosphate (DHAP) to D-glyceraldehyde-3-phosphate (G3P). The sequence is that of Triosephosphate isomerase from Lactobacillus delbrueckii subsp. lactis.